A 125-amino-acid chain; its full sequence is Small ribosomal subunit protein uS13 (125 aa).

Residues 90–125 (QRHRKGLPVRGQRTKTNARTRKGPKRTVAGKKKATK) are disordered.

Belongs to the universal ribosomal protein uS13 family. As to quaternary structure, part of the 30S ribosomal subunit. Forms a loose heterodimer with protein S19. Forms two bridges to the 50S subunit in the 70S ribosome.

Its function is as follows. Located at the top of the head of the 30S subunit, it contacts several helices of the 16S rRNA. In the 70S ribosome it contacts the 23S rRNA (bridge B1a) and protein L5 of the 50S subunit (bridge B1b), connecting the 2 subunits; these bridges are implicated in subunit movement. Contacts the tRNAs in the A and P-sites. In Bifidobacterium longum subsp. infantis (strain ATCC 15697 / DSM 20088 / JCM 1222 / NCTC 11817 / S12), this protein is Small ribosomal subunit protein uS13.